The sequence spans 507 residues: ATP synthase subunit alpha, chloroplastic (507 aa).

170–177 (GDRQTGKT) contacts ATP.

This sequence belongs to the ATPase alpha/beta chains family. In terms of assembly, F-type ATPases have 2 components, CF(1) - the catalytic core - and CF(0) - the membrane proton channel. CF(1) has five subunits: alpha(3), beta(3), gamma(1), delta(1), epsilon(1). CF(0) has four main subunits: a, b, b' and c.

The protein resides in the plastid. It localises to the chloroplast thylakoid membrane. The enzyme catalyses ATP + H2O + 4 H(+)(in) = ADP + phosphate + 5 H(+)(out). Its function is as follows. Produces ATP from ADP in the presence of a proton gradient across the membrane. The alpha chain is a regulatory subunit. In Pelargonium hortorum (Common geranium), this protein is ATP synthase subunit alpha, chloroplastic.